Consider the following 47-residue polypeptide: Delta-actitoxin-Cgg1b (47 aa).

Pro3 is subject to Hydroxyproline. 3 disulfide bridges follow: Cys4–Cys44, Cys6–Cys34, and Cys27–Cys45.

It belongs to the sea anemone sodium channel inhibitory toxin family. Type I subfamily.

It is found in the secreted. Its subcellular location is the nematocyst. Binds voltage-dependently at site 3 of sodium channels (Nav) and inhibits the inactivation, thereby blocking neuronal transmission. The sequence is that of Delta-actitoxin-Cgg1b from Condylactis gigantea (Giant Caribbean anemone).